The sequence spans 4749 residues: Dynein heavy chain domain-containing protein 1 (4749 aa).

The segment covering 1-18 (MKPHSQTSPPSLPMPSTS) has biased composition (low complexity). Disordered regions lie at residues 1-27 (MKPH…TQKP), 275-308 (ESSD…KKSS), and 2690-2785 (ESLA…KLQS). The segment covering 2696 to 2716 (CEEEEVEEEKVPEVESEEEIA) has biased composition (acidic residues). Over residues 2738 to 2749 (QATTGSFLSENS) the composition is skewed to polar residues. Residues 3197–3224 (CQHQESLIENLVRQHDALKAQQEVFLEQ) are a coiled coil. Residues 3568–3667 (PPKQNRSLEP…SLPSCLTVLS (100 aa)) form a disordered region. Basic and acidic residues predominate over residues 3578 to 3593 (SPKESKEKFHVTKQDS). A coiled-coil region spans residues 3594 to 3636 (GDNTEDELEDENNEEEDEANEQRKEQKAEENKIQGENEQEVQE). Positions 3595 to 3612 (DNTEDELEDENNEEEDEA) are enriched in acidic residues. Over residues 3613–3628 (NEQRKEQKAEENKIQG) the composition is skewed to basic and acidic residues. Over residues 3644–3655 (ESSGSHSSLPSE) the composition is skewed to low complexity. A compositionally biased stretch (polar residues) spans 3656–3667 (TQSLPSCLTVLS). Coiled coils occupy residues 3818-3838 (MVRT…LEDQ) and 4431-4451 (ERQL…LQAL).

Belongs to the dynein heavy chain family. In terms of tissue distribution, expressed in spermatozoa (at protein level).

It is found in the cell projection. Its subcellular location is the cilium. The protein localises to the flagellum. Functionally, essential for the normal function of sperm flagella axonemes. The polypeptide is Dynein heavy chain domain-containing protein 1 (Dnhd1) (Mus musculus (Mouse)).